We begin with the raw amino-acid sequence, 43 residues long: Protein PsbN (43 aa).

A helical transmembrane segment spans residues 5–27 (TLIAISISGLLVSFTGYALYTAF).

It belongs to the PsbN family.

Its subcellular location is the plastid. It is found in the chloroplast thylakoid membrane. Its function is as follows. May play a role in photosystem I and II biogenesis. This is Protein PsbN from Phaseolus vulgaris (Kidney bean).